The sequence spans 1074 residues: DNA helicase B (1074 aa).

Disordered stretches follow at residues Met1–Phe38, Gly380–Ser420, and Gly932–Glu1014. Positions Asp20 to Phe38 are enriched in acidic residues. The segment covering Cys934–Ser946 has biased composition (polar residues). Phosphoserine is present on residues Ser942 and Ser946. At Thr992 the chain carries Phosphothreonine. Phosphoserine occurs at positions 1015 and 1026. The Nuclear export signal motif lies at Val1022–Leu1046. Residues Thr1040–Met1074 form a disordered region.

It belongs to the RecD family. HELB subfamily. Binds to RPA1; this interaction promotes HELB recruitment to chromatin following DNA damage. Interacts with at least two subunits of the DNA polymerase alpha complex. Interacts with CDC45. Interacts with TOPB1. Phosphorylated at Ser-942 by CDK2 during the G1/S transition, resulting in its nuclear export into the cytoplasm. As S phase progresses, its exclusion from the nucleus promotes the activation of long-range resection.

It is found in the nucleus. The protein localises to the cytoplasm. It localises to the chromosome. The enzyme catalyses ATP + H2O = ADP + phosphate + H(+). Functionally, 5'-3' DNA helicase involved in DNA damage response by acting as an inhibitor of DNA end resection. Recruitment to single-stranded DNA (ssDNA) following DNA damage leads to inhibit the nucleases catalyzing resection, such as EXO1, BLM and DNA2, possibly via the 5'-3' ssDNA translocase activity of HELB. As cells approach S phase, DNA end resection is promoted by the nuclear export of HELB following phosphorylation. Acts independently of TP53BP1. Unwinds duplex DNA with 5'-3' polarity. Has single-strand DNA-dependent ATPase and DNA helicase activities. Prefers ATP and dATP as substrates. During S phase, may facilitate cellular recovery from replication stress. This chain is DNA helicase B, found in Mus musculus (Mouse).